We begin with the raw amino-acid sequence, 356 residues long: Phosphoserine aminotransferase (356 aa).

L-glutamate is bound at residue Arg41. Residues 75-76, Trp100, Thr147, Asp166, and Gln189 contribute to the pyridoxal 5'-phosphate site; that span reads AT. At Lys190 the chain carries N6-(pyridoxal phosphate)lysine. Position 227–228 (227–228) interacts with pyridoxal 5'-phosphate; the sequence is NT.

This sequence belongs to the class-V pyridoxal-phosphate-dependent aminotransferase family. SerC subfamily. In terms of assembly, homodimer. Pyridoxal 5'-phosphate serves as cofactor.

It localises to the cytoplasm. It carries out the reaction O-phospho-L-serine + 2-oxoglutarate = 3-phosphooxypyruvate + L-glutamate. The enzyme catalyses 4-(phosphooxy)-L-threonine + 2-oxoglutarate = (R)-3-hydroxy-2-oxo-4-phosphooxybutanoate + L-glutamate. The protein operates within amino-acid biosynthesis; L-serine biosynthesis; L-serine from 3-phospho-D-glycerate: step 2/3. Catalyzes the reversible conversion of 3-phosphohydroxypyruvate to phosphoserine and of 3-hydroxy-2-oxo-4-phosphonooxybutanoate to phosphohydroxythreonine. The sequence is that of Phosphoserine aminotransferase from Exiguobacterium sp. (strain ATCC BAA-1283 / AT1b).